Here is a 379-residue protein sequence, read N- to C-terminus: Cytochrome b (379 aa).

A run of 4 helical transmembrane segments spans residues 33 to 53 (FGSLLGVCLMIQILTGLFLAM), 77 to 98 (WLIRYLHANGASMFFICLFIHV), 113 to 133 (WNIGIILFLTTMATAFVGYVL), and 178 to 198 (FFAFHFILPFIITAFVLVHLL). Heme b-binding residues include His83 and His97. Heme b is bound by residues His182 and His196. His201 contacts a ubiquinone. A run of 4 helical transmembrane segments spans residues 226-246 (IKDLLGILFLLMALMILALFF), 288-308 (LGGVLALLLSIIILAAFPLLN), 320-340 (VTQTIYWIFIANLLVLTWIGG), and 347-367 (FTMIGQIASVIYFATIIVLMP).

It belongs to the cytochrome b family. As to quaternary structure, the cytochrome bc1 complex contains 11 subunits: 3 respiratory subunits (MT-CYB, CYC1 and UQCRFS1), 2 core proteins (UQCRC1 and UQCRC2) and 6 low-molecular weight proteins (UQCRH/QCR6, UQCRB/QCR7, UQCRQ/QCR8, UQCR10/QCR9, UQCR11/QCR10 and a cleavage product of UQCRFS1). This cytochrome bc1 complex then forms a dimer. The cofactor is heme b.

Its subcellular location is the mitochondrion inner membrane. Component of the ubiquinol-cytochrome c reductase complex (complex III or cytochrome b-c1 complex) that is part of the mitochondrial respiratory chain. The b-c1 complex mediates electron transfer from ubiquinol to cytochrome c. Contributes to the generation of a proton gradient across the mitochondrial membrane that is then used for ATP synthesis. This chain is Cytochrome b (MT-CYB), found in Akodon iniscatus (Intelligent grass mouse).